Consider the following 261-residue polypeptide: MSYTPGVGGDPAQLAQRISSNIQKITQCSVEIQRTLNQLGTPQDSPELRQQLQQKQQYTNQLAKETDKYIKEFGSLPTTPSEQRQRKIQKDRLVAEFTTSLTNFQKVQRQAAEREKEFVARVRASSRVSGSFPEDSSKERNLVSWESQTQPQVQVQDEEITEDDLRLIHERESSIRQLEADIMDINEIFKDLGMMIHEQGDVIDSIEANVENAEVHVQQANQQLSRAADYQRKSRKTLCIIILILVIGVAIISLIIWGLNH.

Residue Ser2 is modified to N-acetylserine. The Cytoplasmic portion of the chain corresponds to 2–238 (SYTPGVGGDP…DYQRKSRKTL (237 aa)). Position 4 is a phosphothreonine (Thr4). Position 45 is a phosphoserine (Ser45). Positions 47-69 (ELRQQLQQKQQYTNQLAKETDKY) form a coiled coil. Position 75 is a phosphoserine (Ser75). A Phosphothreonine modification is found at Thr79. Residues Ser125, Ser126, Ser129, and Ser205 each carry the phosphoserine modification. The tract at residues 129 to 148 (SGSFPEDSSKERNLVSWESQ) is disordered. One can recognise a t-SNARE coiled-coil homology domain in the interval 165-227 (LRLIHERESS…QQANQQLSRA (63 aa)). Residues 239–259 (CIIILILVIGVAIISLIIWGL) form a helical; Anchor for type IV membrane protein membrane-spanning segment. Topologically, residues 260–261 (NH) are vesicular.

The protein belongs to the syntaxin family. As to quaternary structure, forms a SNARE complex with VTI1B, STX8 and VAMP8 which functions in the homotypic fusion of late endosomes. Component of the SNARE complex composed of STX7, STX8, VAMP7 and VTI1B that is required for heterotypic fusion of late endosomes with lysosomes. Interacts with VPS11, VPS16 and VPS18. Interacts with VPS33A. Interacts with TPC1. In terms of tissue distribution, highest expression is found in placenta followed by heart, skeletal muscle, kidney and brain. Low expression is found in pancreas, lung and liver.

It localises to the early endosome membrane. In terms of biological role, may be involved in protein trafficking from the plasma membrane to the early endosome (EE) as well as in homotypic fusion of endocytic organelles. Mediates the endocytic trafficking from early endosomes to late endosomes and lysosomes. This chain is Syntaxin-7 (STX7), found in Homo sapiens (Human).